A 115-amino-acid polypeptide reads, in one-letter code: MVAAKKTKKSLESINSRLQLVMKSGKYVLGYKQTLKMIRQGKAKLVILANNCPALRKSEIEYYAMLAKTGVHHYSGNNIELGTACGKYYRVCTLAIIDPGDSDIIRSMPEQTGEK.

A phosphoserine mark is found at serine 10 and serine 16. The residue at position 26 (lysine 26) is an N6-acetyllysine; alternate. Lysine 26 participates in a covalent cross-link: Glycyl lysine isopeptide (Lys-Gly) (interchain with G-Cter in SUMO2); alternate.

It belongs to the eukaryotic ribosomal protein eL30 family. As to quaternary structure, component of the large ribosomal subunit.

Its subcellular location is the cytoplasm. Functionally, component of the large ribosomal subunit. The ribosome is a large ribonucleoprotein complex responsible for the synthesis of proteins in the cell. This Homo sapiens (Human) protein is Large ribosomal subunit protein eL30 (RPL30).